The chain runs to 89 residues: Small ribosomal subunit protein uS15 (89 aa).

Belongs to the universal ribosomal protein uS15 family. In terms of assembly, part of the 30S ribosomal subunit. Forms a bridge to the 50S subunit in the 70S ribosome, contacting the 23S rRNA.

One of the primary rRNA binding proteins, it binds directly to 16S rRNA where it helps nucleate assembly of the platform of the 30S subunit by binding and bridging several RNA helices of the 16S rRNA. Its function is as follows. Forms an intersubunit bridge (bridge B4) with the 23S rRNA of the 50S subunit in the ribosome. The chain is Small ribosomal subunit protein uS15 from Rhodococcus erythropolis (strain PR4 / NBRC 100887).